Here is a 168-residue protein sequence, read N- to C-terminus: Profilin-3 (168 aa).

A disordered region spans residues 14–36 (LSLEHSDKPQRRSRAKVKKKKKT). The span at 24-36 (RRSRAKVKKKKKT) shows a compositional bias: basic residues.

Belongs to the profilin family. Occurs in many kinds of cells as a complex with monomeric actin in a 1:1 ratio. Binding to the poly-proline motif of formins induces formation of oligomers through the N-terminal hydrophobic residues of PRF3. In terms of tissue distribution, expressed in roots, rosette leaves, cauline leaves, stems and flowers.

The protein localises to the cytoplasm. The protein resides in the cytoskeleton. In terms of biological role, binds to actin monomers and regulates the organization of the actin cytoskeleton. Can increase the critical concentration (Cc) of actin assembly in vitro. Acts as a downstream effector of the hydrogen sulfide signaling to regulate the assembly and depolymerization of F-actin. At high concentrations, profilin prevents the polymerization of actin, whereas it enhances it at low concentrations. Binding to the poly-proline motif of formin induces oligomerization of PRF3. PRF3 oligomers inhibit formin-mediated actin assembly to modulate plant immunity triggered by pathogen-associated molecular patterns (PAMPs). This Arabidopsis thaliana (Mouse-ear cress) protein is Profilin-3.